The following is a 533-amino-acid chain: Probable RNA-binding protein 46 (533 aa).

RRM domains lie at 61-139 (CEVF…VSLD), 141-223 (CRLF…WADP), and 236-308 (KVLY…LAKP). Residues 338–362 (ESHSKSLGKPPTLPTRLNGQHSPSP) are disordered.

In terms of assembly, interacts with YTHDC2, MEIOC, MOV10, CNOT6L, DDX4, UPF1 and PABPC1. Expressed in the testis and ovary (at protein level). Expressed in spermatogonia and spermatocytes in testis (at protein level).

The protein resides in the cytoplasm. Essential for male and female fertility, playing a crucial role in regulating germ cell development by ensuring the proper progression of meiosis prophase I. Regulates mitotic-to-meiotic transition in spermatogenesis by forming a complex with MEIOC and YTHDC2 which recognizes and down-regulates mitotic transcripts for a successful meiotic entry. Required for normal synaptonemal complex formation during meiosis, binding meiotic cohesin subunit mRNAs containing GCCUAU/GUUCGA motifs in their 3'UTRs regions and positively regulating their translation. Required for spermatogonial differentiation in both developing and adult testis. The protein is Probable RNA-binding protein 46 of Mus musculus (Mouse).